The sequence spans 727 residues: Glycerol-3-phosphate dehydrogenase, mitochondrial (727 aa).

The transit peptide at 1–42 directs the protein to the mitochondrion; it reads MAFQKVVKGTILMGGGALATVLGLSQFAHYRRKQVSLAYVEA. 71–99 contributes to the FAD binding site; the sequence is DILVIGGGATGCGCALDAVTRGLKTALVE. Y601 is modified (phosphotyrosine). EF-hand domains lie at 623 to 658 and 659 to 694; these read PDID…INVQ and MDED…VHTG. Residues D672, N674, N676, Q678, and E683 each contribute to the Ca(2+) site.

It belongs to the FAD-dependent glycerol-3-phosphate dehydrogenase family. Requires FAD as cofactor.

It is found in the mitochondrion. The catalysed reaction is a quinone + sn-glycerol 3-phosphate = dihydroxyacetone phosphate + a quinol. It functions in the pathway polyol metabolism; glycerol degradation via glycerol kinase pathway; glycerone phosphate from sn-glycerol 3-phosphate (anaerobic route): step 1/1. With respect to regulation, calcium-binding enhance the activity of the enzyme. Functionally, calcium-responsive mitochondrial glycerol-3-phosphate dehydrogenase which seems to be a key component of the pancreatic beta-cell glucose-sensing device. The chain is Glycerol-3-phosphate dehydrogenase, mitochondrial from Rattus norvegicus (Rat).